The following is a 107-amino-acid chain: ESAT-6-like protein EsxD (107 aa).

Belongs to the WXG100 family. CFP-10 subfamily.

The protein localises to the secreted. This chain is ESAT-6-like protein EsxD, found in Mycobacterium tuberculosis (strain ATCC 25618 / H37Rv).